Reading from the N-terminus, the 192-residue chain is NADH-quinone oxidoreductase subunit B (192 aa).

The [4Fe-4S] cluster site is built by cysteine 71, cysteine 72, cysteine 136, and cysteine 166.

The protein belongs to the complex I 20 kDa subunit family. In terms of assembly, NDH-1 is composed of 14 different subunits. Subunits NuoB, C, D, E, F, and G constitute the peripheral sector of the complex. [4Fe-4S] cluster is required as a cofactor.

The protein localises to the cell inner membrane. The catalysed reaction is a quinone + NADH + 5 H(+)(in) = a quinol + NAD(+) + 4 H(+)(out). NDH-1 shuttles electrons from NADH, via FMN and iron-sulfur (Fe-S) centers, to quinones in the respiratory chain. Couples the redox reaction to proton translocation (for every two electrons transferred, four hydrogen ions are translocated across the cytoplasmic membrane), and thus conserves the redox energy in a proton gradient. This Azorhizobium caulinodans (strain ATCC 43989 / DSM 5975 / JCM 20966 / LMG 6465 / NBRC 14845 / NCIMB 13405 / ORS 571) protein is NADH-quinone oxidoreductase subunit B.